The chain runs to 98 residues: Small ribosomal subunit protein bS6 (98 aa).

It belongs to the bacterial ribosomal protein bS6 family.

Functionally, binds together with bS18 to 16S ribosomal RNA. This is Small ribosomal subunit protein bS6 from Lactobacillus acidophilus (strain ATCC 700396 / NCK56 / N2 / NCFM).